The sequence spans 1029 residues: Protein phosphatase 1 regulatory subunit 12A (1029 aa).

Positions 35–38 (KVKF) match the KVKF motif motif. 6 ANK repeats span residues 39 to 68 (DDGA…DINY), 72 to 101 (DGLT…NINQ), 105 to 134 (EGWI…HVGA), 138 to 164 (EGDT…RQGV), 198 to 227 (SGGT…DVNI), and 231 to 260 (DGWT…DMET). Asn-67 and Asn-100 each carry (3S)-3-hydroxyasparagine; by HIF1AN. Residue Asn-226 is modified to (3S)-3-hydroxyasparagine; by HIF1AN. The disordered stretch occupies residues 290–786 (LHSEKRDKKS…APSSSSLSTL (497 aa)). Positions 291-300 (HSEKRDKKSP) are enriched in basic and acidic residues. Ser-299 bears the Phosphoserine mark. Residues 302–314 (IESTANMENNQPQ) show a composition bias toward polar residues. A compositionally biased stretch (basic and acidic residues) spans 318-353 (KNKETLIIEPEKNASRIESLEHEKADEEEEGKKDES). Acidic residues predominate over residues 357–369 (SEEDEEDDSESEA). Over residues 385-402 (TSSTQAAPAAVTAPTLSS) the composition is skewed to low complexity. A phosphoserine mark is found at Ser-422 and Ser-432. Residues 422–432 (SPKEEERKDES) are compositionally biased toward basic and acidic residues. A Phosphothreonine modification is found at Thr-443. A Phosphoserine; by NUAK1 modification is found at Ser-445. Phosphotyrosine is present on Tyr-446. Positions 469–480 (RSASSPRLSSSL) are enriched in low complexity. Ser-472 carries the phosphoserine; by NUAK1 modification. A Phosphoserine; by CDK1 modification is found at Ser-473. Ser-477 bears the Phosphoserine mark. Residues 481–491 (DNKEKEKDNKG) show a composition bias toward basic and acidic residues. 2 positions are modified to phosphoserine: Ser-507 and Ser-509. The span at 540-551 (NSSINEGSTYHR) shows a compositional bias: polar residues. Over residues 564–578 (SCSVPSTTSTPTVTS) the composition is skewed to low complexity. Polar residues predominate over residues 585-594 (SLPSSTSTAA). Residues 596–610 (TPPGSSSAGTQSSTS) show a composition bias toward low complexity. A phosphoserine mark is found at Ser-601 and Ser-618. Residues 614 to 625 (WAEDSTEKEKDS) are compositionally biased toward basic and acidic residues. Positions 626 to 656 (APTAVTIPVAPTVVNAAAPSTTTLTTTTAGT) are enriched in low complexity. Positions 671–680 (VRDEESESQR) are enriched in basic and acidic residues. The interaction with ROCK2 stretch occupies residues 680–863 (RKARSRQARQ…VSFWTQDSDE (184 aa)). The span at 681–691 (KARSRQARQSR) shows a compositional bias: basic residues. Phosphoserine; by PKA and PKG; in vitro is present on residues Ser-690 and Ser-693. Residue Thr-694 is modified to Phosphothreonine; by ROCK1, ROCK2, CDC42BP, ZIPK/DAPK3 and RAF1. The span at 716–765 (RTREQENEEKEKEEKEKQDKEKQEEKKESEASREDEYKQKYSRTYDETYT) shows a compositional bias: basic and acidic residues. Residues 771-786 (STSSSSAPSSSSLSTL) show a composition bias toward low complexity. The residue at position 801 (Ser-801) is a Phosphoserine. The tract at residues 808–927 (AYSRGLAKEN…PYSSRLEKDD (120 aa)) is disordered. Basic and acidic residues predominate over residues 813–839 (LAKENEREGEKKEEEKEGEDKSQPKSI). Basic residues predominate over residues 840–851 (RERRRPREKRRS). Ser-851 is subject to Phosphoserine; by ROCK2. A phosphoserine mark is found at Ser-861 and Ser-870. Residues 866-882 (QERQSDTEDGSSKRETQ) are compositionally biased toward basic and acidic residues. Residues 883–897 (TDSVSRYDSSSTSSS) show a composition bias toward low complexity. Residues Ser-902 and Ser-907 each carry the phosphoserine modification. Phosphoserine; by NUAK1 is present on Ser-909. A compositionally biased stretch (basic and acidic residues) spans 913–927 (LEDRKPYSSRLEKDD). Ser-994 is subject to Phosphoserine.

As to quaternary structure, PP1 comprises a catalytic subunit, PPP1CA, PPP1CB or PPP1CC, and one or several targeting or regulatory subunits. PPP1R12A mediates binding to myosin. Interacts with ARHA and CIT. Binds PPP1R12B, ROCK1 and IL16. Interacts directly with PRKG1. Non-covalent dimer of 2 dimers; PRKG1-PRKG1 and PPP1R12A-PPP1R12A. Interacts with SMTNL1. Interacts with PPP1CB; the interaction is direct. Interacts (when phosphorylated at Ser-445, Ser-472 and Ser-910) with 14-3-3. Interacts with ROCK1 and ROCK2. Interacts with isoform 1 and isoform 2 of ZIPK/DAPK3. Interacts with RAF1. Interacts with HIF1AN. Interacts with NCKAP1L. Phosphorylated by CIT (Rho-associated kinase). Phosphorylated cooperatively by ROCK1 and CDC42BP on Thr-694. Phosphorylated on upon DNA damage, probably by ATM or ATR. In vitro, phosphorylation of Ser-693 by PKA and PKG appears to prevent phosphorylation of the inhibitory site Thr-694, probably mediated by PRKG1. Phosphorylation at Ser-445, Ser-472 and Ser-909 by NUAK1 promotes interaction with 14-3-3, leading to inhibit interaction with myosin light chain MLC2, preventing dephosphorylation of MLC2. May be phosphorylated at Thr-694 by DMPK; may inhibit the myosin phosphatase activity. Phosphorylated at Ser-473 by CDK1 during mitosis, creating docking sites for the POLO box domains of PLK1. Subsequently, PLK1 binds and phosphorylates PPP1R12A. As to expression, expressed in striated and vascular smooth muscle, specificcally in type 2a fibers (at protein level). Expression levels are 20-30% higher in developed males than females (at protein level).

Its subcellular location is the cytoplasm. It localises to the cytoskeleton. The protein localises to the stress fiber. Functionally, key regulator of protein phosphatase 1C (PPP1C). Mediates binding to myosin. As part of the PPP1C complex, involved in dephosphorylation of PLK1. Capable of inhibiting HIF1AN-dependent suppression of HIF1A activity. The polypeptide is Protein phosphatase 1 regulatory subunit 12A (Mus musculus (Mouse)).